A 948-amino-acid polypeptide reads, in one-letter code: Isoleucine--tRNA ligase (948 aa).

The short motif at 58 to 68 (PYANGDIHIGH) is the 'HIGH' region element. Residue Glu566 participates in L-isoleucyl-5'-AMP binding. The short motif at 607–611 (KMSKS) is the 'KMSKS' region element. Residue Lys610 participates in ATP binding. Zn(2+) is bound by residues Cys911, Cys914, Cys931, and Cys934.

It belongs to the class-I aminoacyl-tRNA synthetase family. IleS type 1 subfamily. In terms of assembly, monomer. Zn(2+) serves as cofactor.

It is found in the cytoplasm. The catalysed reaction is tRNA(Ile) + L-isoleucine + ATP = L-isoleucyl-tRNA(Ile) + AMP + diphosphate. In terms of biological role, catalyzes the attachment of isoleucine to tRNA(Ile). As IleRS can inadvertently accommodate and process structurally similar amino acids such as valine, to avoid such errors it has two additional distinct tRNA(Ile)-dependent editing activities. One activity is designated as 'pretransfer' editing and involves the hydrolysis of activated Val-AMP. The other activity is designated 'posttransfer' editing and involves deacylation of mischarged Val-tRNA(Ile). This Vibrio vulnificus (strain CMCP6) protein is Isoleucine--tRNA ligase.